Reading from the N-terminus, the 224-residue chain is Cytidylate kinase (224 aa).

Residue Gly-10–Thr-18 coordinates ATP.

It belongs to the cytidylate kinase family. Type 1 subfamily.

Its subcellular location is the cytoplasm. It catalyses the reaction CMP + ATP = CDP + ADP. The enzyme catalyses dCMP + ATP = dCDP + ADP. The protein is Cytidylate kinase of Haemophilus ducreyi (strain 35000HP / ATCC 700724).